We begin with the raw amino-acid sequence, 84 residues long: MSSGGLLLLLGLLTLWAEPTPISGQDRPKFCFLRPDFGRYGHPRPRFYYNPATNQCQGFLAQRSRENTNNFDTRDKCRQTCGRK.

A signal peptide spans 1 to 24 (MSSGGLLLLLGLLTLWAEPTPISG). Pyrrolidone carboxylic acid is present on Q25. The BPTI/Kunitz inhibitor domain occupies 31–81 (CFLRPDFGRYGHPRPRFYYNPATNQCQGFLAQRSRENTNNFDTRDKCRQTC). Cystine bridges form between C31–C81 and C56–C77.

This sequence belongs to the venom Kunitz-type family. Expressed by the venom gland.

It is found in the secreted. In terms of biological role, serine protease inhibitor. In Daboia russelii (Russel's viper), this protein is Kunitz-type serine protease inhibitor 2.